A 472-amino-acid chain; its full sequence is Glycine--tRNA ligase (472 aa).

2 residues coordinate substrate: arginine 109 and glutamate 174. ATP-binding positions include 206–208 (RNE), 216–221 (FRTREF), 293–294 (EL), and 337–340 (GLTR). 221–225 (FEQME) is a binding site for substrate. 333–337 (EPAAG) serves as a coordination point for substrate.

Belongs to the class-II aminoacyl-tRNA synthetase family. As to quaternary structure, homodimer.

It is found in the cytoplasm. The enzyme catalyses tRNA(Gly) + glycine + ATP = glycyl-tRNA(Gly) + AMP + diphosphate. Functionally, catalyzes the attachment of glycine to tRNA(Gly). The polypeptide is Glycine--tRNA ligase (Cutibacterium acnes (strain DSM 16379 / KPA171202) (Propionibacterium acnes)).